We begin with the raw amino-acid sequence, 334 residues long: MNSETPAAGPQQAQPPATLTIASRESRLAMWQAEHVRDALRKLYPACDVKILGMTTRGDQILDRTLSKVGGKGLFVKELEAALADGRADLAVHSLKDVPMALPDGFSLAAIMEREDPRDAFVSNDYASLDALPAGAVVGTSSLRREAMLRSRYPHLEVLPLRGNLDTRLAKLDRGDYAAIILAAAGLKRLGLEARIRALLDVEASPPAAGQGALGIEIAAHRDDVAAWLAPLHDPQTALAVEAERMVSRALGGSCEVPLAAHAVWRAGELYLTGRVSTTDGKRVLTAEECGAVVTVADALALGRAVSDELEAQGALDIVQALLAGSQAAGKGDA.

C255 carries the post-translational modification S-(dipyrrolylmethanemethyl)cysteine.

Belongs to the HMBS family. As to quaternary structure, monomer. It depends on dipyrromethane as a cofactor.

The enzyme catalyses 4 porphobilinogen + H2O = hydroxymethylbilane + 4 NH4(+). It participates in porphyrin-containing compound metabolism; protoporphyrin-IX biosynthesis; coproporphyrinogen-III from 5-aminolevulinate: step 2/4. Tetrapolymerization of the monopyrrole PBG into the hydroxymethylbilane pre-uroporphyrinogen in several discrete steps. This is Porphobilinogen deaminase from Burkholderia orbicola (strain MC0-3).